The sequence spans 65 residues: Large ribosomal subunit protein bL35 (65 aa).

Positions 1–23 are disordered; sequence MPKIKTNRGAAKRFKKTGTGKVK. The segment covering 10–23 has biased composition (basic residues); the sequence is AAKRFKKTGTGKVK.

This sequence belongs to the bacterial ribosomal protein bL35 family.

The protein is Large ribosomal subunit protein bL35 of Trichlorobacter lovleyi (strain ATCC BAA-1151 / DSM 17278 / SZ) (Geobacter lovleyi).